The chain runs to 393 residues: LL-diaminopimelate aminotransferase (393 aa).

2 residues coordinate substrate: Y14 and G41. Pyridoxal 5'-phosphate is bound by residues Y71, 104-105 (AK), Y128, N174, Y205, and 233-235 (SFS). Substrate-binding residues include K105, Y128, and N174. K236 carries the N6-(pyridoxal phosphate)lysine modification. Residues R244 and N275 each contribute to the pyridoxal 5'-phosphate site. Substrate contacts are provided by N275 and R369.

It belongs to the class-I pyridoxal-phosphate-dependent aminotransferase family. LL-diaminopimelate aminotransferase subfamily. Homodimer. It depends on pyridoxal 5'-phosphate as a cofactor.

It catalyses the reaction (2S,6S)-2,6-diaminopimelate + 2-oxoglutarate = (S)-2,3,4,5-tetrahydrodipicolinate + L-glutamate + H2O + H(+). It participates in amino-acid biosynthesis; L-lysine biosynthesis via DAP pathway; LL-2,6-diaminopimelate from (S)-tetrahydrodipicolinate (aminotransferase route): step 1/1. In terms of biological role, involved in the synthesis of meso-diaminopimelate (m-DAP or DL-DAP), required for both lysine and peptidoglycan biosynthesis. Catalyzes the direct conversion of tetrahydrodipicolinate to LL-diaminopimelate. This chain is LL-diaminopimelate aminotransferase, found in Chlamydia muridarum (strain MoPn / Nigg).